The primary structure comprises 341 residues: MKALSKLKAEEGIWMTDVPVPELGHNDLLIKIRKTAICGTDVHIYNWDEWSQKTIPVPMVVGHEYVGEVVGIGQEVKGFKIGDRVSGEGHITCGHCRNCRGGRTHLCRNTIGVGVNRPGCFAEYLVIPAFNAFKIPDNISDDLAAIFDPFGNAVHTALSFDLVGEDVLVSGAGPIGIMAAAVAKHVGARNVVITDVNEYRLELARKMGITRAVNVAKENLNDVMAELGMTEGFDVGLEMSGAPPAFRTMLDTMNHGGRIAMLGIPPSDMSIDWTKVIFKGLFIKGIYGREMFETWYKMAALIQSGLDLSPIITHRFSIDDFQKGFDAMRSGQSGKVILSWD.

Cys38 serves as a coordination point for Zn(2+). Catalysis depends on charge relay system residues Thr40 and His43. Residues His63, Glu64, Cys93, Cys96, Cys99, and Cys107 each contribute to the Zn(2+) site. Residues Ile175, Asp195, Arg200, 262 to 264, and 286 to 287 contribute to the NAD(+) site; these read LGI and IY.

Belongs to the zinc-containing alcohol dehydrogenase family. Homotetramer. The cofactor is Zn(2+).

It localises to the cytoplasm. It catalyses the reaction L-threonine + NAD(+) = (2S)-2-amino-3-oxobutanoate + NADH + H(+). Its pathway is amino-acid degradation; L-threonine degradation via oxydo-reductase pathway; glycine from L-threonine: step 1/2. Its function is as follows. Catalyzes the NAD(+)-dependent oxidation of L-threonine to 2-amino-3-ketobutyrate. The sequence is that of L-threonine 3-dehydrogenase from Escherichia coli (strain K12 / MC4100 / BW2952).